An 882-amino-acid polypeptide reads, in one-letter code: Putative HTH-type transcriptional regulator Rv0890c (882 aa).

The HTH luxR-type domain occupies 814–879; that stretch reads PARGWGSLTP…QLVDEAARRG (66 aa). A DNA-binding region (H-T-H motif) is located at residues 838–857; it reads NKDIAKRLFVSPRTVQTHLT.

The protein is Putative HTH-type transcriptional regulator Rv0890c of Mycobacterium tuberculosis (strain ATCC 25618 / H37Rv).